An 84-amino-acid polypeptide reads, in one-letter code: LEEGEITSKVKFPPSSSPSFPRLVMVGTLPDLQEITLCYWFKVNQLKGTLGHSRVLBMFSYATAKKDNELLTFLDEQGDFLFNV.

One can recognise a Pentraxin (PTX) domain in the interval 6–84 (ITSKVKFPPS…DEQGDFLFNV (79 aa)). Ca(2+) contacts are provided by Asp67 and Asn68.

This sequence belongs to the pentraxin family. Homopentamer. Pentraxin (or pentaxin) have a discoid arrangement of 5 non-covalently bound subunits. Ca(2+) is required as a cofactor. A disulfide bond links Cys-38 to a Cys in the C-terminal half of the chain of 163 residues.

Functionally, lectin that binds sialic acid. Displays antiviral activity and therefore may contribute to defense against infections. This Limulus polyphemus (Atlantic horseshoe crab) protein is Limulin.